Consider the following 370-residue polypeptide: Cobalt-precorrin-5B C(1)-methyltransferase (370 aa).

The protein belongs to the CbiD family.

The catalysed reaction is Co-precorrin-5B + S-adenosyl-L-methionine = Co-precorrin-6A + S-adenosyl-L-homocysteine. The protein operates within cofactor biosynthesis; adenosylcobalamin biosynthesis; cob(II)yrinate a,c-diamide from sirohydrochlorin (anaerobic route): step 6/10. In terms of biological role, catalyzes the methylation of C-1 in cobalt-precorrin-5B to form cobalt-precorrin-6A. This is Cobalt-precorrin-5B C(1)-methyltransferase from Prochlorococcus marinus (strain MIT 9312).